Here is a 195-residue protein sequence, read N- to C-terminus: Probable GTP-binding protein EngB (195 aa).

Residues 22 to 194 (LKGEVAFVGR…LDLISTLLKE (173 aa)) form the EngB-type G domain. GTP-binding positions include 30-37 (GRSNVGKS), 56-60 (GKTRS), 74-77 (DLPG), 141-144 (TKMD), and 173-175 (TSS). S37 and T58 together coordinate Mg(2+).

It belongs to the TRAFAC class TrmE-Era-EngA-EngB-Septin-like GTPase superfamily. EngB GTPase family. The cofactor is Mg(2+).

Functionally, necessary for normal cell division and for the maintenance of normal septation. The chain is Probable GTP-binding protein EngB from Thermotoga sp. (strain RQ2).